A 370-amino-acid polypeptide reads, in one-letter code: tRNA 2-selenouridine synthase (370 aa).

In terms of domain architecture, Rhodanese spans 12-136; the sequence is FLDDVPMMDM…MRTFLLETTQ (125 aa). Cysteine 95 serves as the catalytic S-selanylcysteine intermediate.

It belongs to the SelU family. As to quaternary structure, monomer.

It carries out the reaction 5-methylaminomethyl-2-thiouridine(34) in tRNA + selenophosphate + (2E)-geranyl diphosphate + H2O + H(+) = 5-methylaminomethyl-2-selenouridine(34) in tRNA + (2E)-thiogeraniol + phosphate + diphosphate. The enzyme catalyses 5-methylaminomethyl-2-thiouridine(34) in tRNA + (2E)-geranyl diphosphate = 5-methylaminomethyl-S-(2E)-geranyl-thiouridine(34) in tRNA + diphosphate. It catalyses the reaction 5-methylaminomethyl-S-(2E)-geranyl-thiouridine(34) in tRNA + selenophosphate + H(+) = 5-methylaminomethyl-2-(Se-phospho)selenouridine(34) in tRNA + (2E)-thiogeraniol. The catalysed reaction is 5-methylaminomethyl-2-(Se-phospho)selenouridine(34) in tRNA + H2O = 5-methylaminomethyl-2-selenouridine(34) in tRNA + phosphate. Its function is as follows. Involved in the post-transcriptional modification of the uridine at the wobble position (U34) of tRNA(Lys), tRNA(Glu) and tRNA(Gln). Catalyzes the conversion of 2-thiouridine (S2U-RNA) to 2-selenouridine (Se2U-RNA). Acts in a two-step process involving geranylation of 2-thiouridine (S2U) to S-geranyl-2-thiouridine (geS2U) and subsequent selenation of the latter derivative to 2-selenouridine (Se2U) in the tRNA chain. This Pseudomonas putida (strain ATCC 700007 / DSM 6899 / JCM 31910 / BCRC 17059 / LMG 24140 / F1) protein is tRNA 2-selenouridine synthase.